The following is a 410-amino-acid chain: MACTNNAMRALFLLVLFCIVHGEKEESKGIDAKASGPGGSFDITKLGASGNGKTDSTKAVQEAWASACGGTGKQTILIPKGDFLVGQLNFTGPCKGDVTIQVDGNLLATTDLSQYKDHGNWIEILRVDNLVITGKGNLDGQGPAVWSKNSCTKKYDCKILPNSLVMDFVNNGEVSGVTLLNSKFFHMNMYRCKDMLIKDVTVTAPGDSPNTDGIHMGDSSGITITNTVIGVGDDCISIGPGTSKVNITGVTCGPGHGISIGSLGRYKDEKDVTDINVKDCTLKKTMFGVRIKAYEDAASVLTVSKIHYENIKMEDSANPIFIDMKYCPNKLCTANGASKVTVKDVTFKNITGTSSTPEAVSLLCTAKVPCTGVTMDDVNVEYSGTNNKTMAICTNAKGSTKGCLKELACF.

An N-terminal signal peptide occupies residues 1 to 22 (MACTNNAMRALFLLVLFCIVHG). N-linked (GlcNAc...) asparagine glycosylation is present at asparagine 89. PbH1 repeat units follow at residues 192-218 (CKDMLIKDVTVTAPGDSPNTDGIHMGD), 219-240 (SSGITITNTVIGVGDDCISIGP), 242-262 (TSKVNITGVTCGPGHGISIGS), 272-293 (VTDINVKDCTLKKTMFGVRIKA), and 337-377 (ASKV…TMDD). The Proton donor role is filled by aspartate 233. Cysteines 235 and 252 form a disulfide. Asparagine 246 is a glycosylation site (N-linked (GlcNAc...) asparagine). Histidine 256 is a catalytic residue. N-linked (GlcNAc...) asparagine glycosylation is present at asparagine 349. Cysteine 364 and cysteine 370 are disulfide-bonded. Asparagine 387 carries N-linked (GlcNAc...) asparagine glycosylation. Cysteines 393 and 409 form a disulfide.

This sequence belongs to the glycosyl hydrolase 28 family. Pollen.

It localises to the secreted. The protein resides in the cell wall. It catalyses the reaction [(1-&gt;4)-alpha-D-galacturonosyl](n) + H2O = alpha-D-galacturonate + [(1-&gt;4)-alpha-D-galacturonosyl](n-1). Functionally, may function in depolymerizing pectin during pollen development, germination, and tube growth. Acts as an exo-polygalacturonase. This Zea mays (Maize) protein is Exopolygalacturonase (PG1).